The primary structure comprises 495 residues: MTKKYVVALDQGTTSSRAIIFDHDANIVSVSQREFTQIYPQAGWVEHDPMEIWASQSSTLIEVIARSGIHASEIASIGITNQRETTVIWDKQTGKPVYNAIVWQCRRSSEICEELKSQGLEAYIRDTTGLLLDPYFSGTKIKWILDNVSGVRERAERGELLFGTIDTWLVWKLTEGKVHVTDPTNASRTLLFNIHTQSWDKRILEALTIPESLLPQVKPSSAVYGKTRIAGEGGEISIAGIAGDQQSALFGQLCTEPGMAKNTYGTGCFLLMNTGEKAVKSNHGLLTTIAIGAKGEVNYALEGSVFMGGATIQWLRDELGLIRDAQDTEYFASRVESTNGVYLVPAFVGLGAPYWDPSARGALVGLTRGSNRNHIIRAALEAIAYQSRDLLDAMAKDSGVELKKLKVDGGAVANDFLMQFQADITSVEVQRPAVTETTAMGAAFLAGLAVGFWDSTSELKHRADIDKSFMPSISEEQKDELYAGWQKAVSQTING.

ADP is bound at residue Thr13. Thr13, Thr14, and Ser15 together coordinate ATP. Thr13 contacts sn-glycerol 3-phosphate. Arg17 is a binding site for ADP. Sn-glycerol 3-phosphate contacts are provided by Arg83, Glu84, Tyr135, and Asp244. The glycerol site is built by Arg83, Glu84, Tyr135, Asp244, and Gln245. ADP contacts are provided by Thr266 and Gly309. ATP is bound by residues Thr266, Gly309, Gln313, and Gly410. ADP is bound by residues Gly410 and Asn414.

This sequence belongs to the FGGY kinase family.

It catalyses the reaction glycerol + ATP = sn-glycerol 3-phosphate + ADP + H(+). It functions in the pathway polyol metabolism; glycerol degradation via glycerol kinase pathway; sn-glycerol 3-phosphate from glycerol: step 1/1. With respect to regulation, inhibited by fructose 1,6-bisphosphate (FBP). Its function is as follows. Key enzyme in the regulation of glycerol uptake and metabolism. Catalyzes the phosphorylation of glycerol to yield sn-glycerol 3-phosphate. The polypeptide is Glycerol kinase (Shewanella woodyi (strain ATCC 51908 / MS32)).